The chain runs to 580 residues: Glypican-3 (580 aa).

The signal sequence occupies residues 1 to 24 (MAGTVRTACLVVAMLLSLDFPGQA). Q25 bears the Pyrrolidone carboxylic acid mark. 7 cysteine pairs are disulfide-bonded: C35–C72, C65–C262, C73–C265, C197–C349, C252–C285, C274–C422, and C278–C410. 2 N-linked (GlcNAc...) asparagine glycosylation sites follow: N124 and N241. S352 is modified (phosphoserine; by FAM20C). The N-linked (GlcNAc...) asparagine glycan is linked to N418. 2 O-linked (Xyl...) (glycosaminoglycan) serine glycosylation sites follow: S495 and S509. The GPI-anchor amidated asparagine moiety is linked to residue N554. A propeptide spans 555–580 (LGNVHSPLKLLTSMAISVVCFFFLVH) (removed in mature form).

The protein belongs to the glypican family. As to quaternary structure, heterodimer; disulfide-linked. Cleavage by a furin-like convertase results in production of alpha and beta chains which form a disulfide-linked heterodimer. Interacts with DPP4. Interacts with FGF2. Interacts with WNT5A. Also interacts with WNT3A and WNT7B. Interacts with hedgehog protein SHH; the heparan sulfate chains are not required for the interaction. Also interacts with hedgehog protein IHH. Interacts with CD81. Interacts with Wnt receptors FZD4, FZD7 and FZD8; the heparan sulfate chains are required for the interaction. Post-translationally, O-glycosylated; contains heparan sulfate and/or chondroitin sulfate. Cleaved intracellularly by a furin-like convertase to generate 2 subunits, alpha and beta, which remain associated through disulfide bonds and are associated with the cell surface via the GPI-anchor. This processing is essential for its role in inhibition of hedgehog signaling. A second proteolytic event may result in cleavage of the protein on the cell surface, separating it from the GPI-anchor and leading to its shedding from the cell surface. As to expression, detected in placenta (at protein level). Highly expressed in lung, liver and kidney.

It is found in the cell membrane. In terms of biological role, cell surface proteoglycan. Negatively regulates the hedgehog signaling pathway when attached via the GPI-anchor to the cell surface by competing with the hedgehog receptor PTC1 for binding to hedgehog proteins. Binding to the hedgehog protein SHH triggers internalization of the complex by endocytosis and its subsequent lysosomal degradation. Positively regulates the canonical Wnt signaling pathway by binding to the Wnt receptor Frizzled and stimulating the binding of the Frizzled receptor to Wnt ligands. Positively regulates the non-canonical Wnt signaling pathway. Binds to CD81 which decreases the availability of free CD81 for binding to the transcriptional repressor HHEX, resulting in nuclear translocation of HHEX and transcriptional repression. Inhibits the dipeptidyl peptidase activity of DPP4. Plays a role in limb patterning and skeletal development by controlling the cellular response to BMP4. Modulates the effects of growth factors BMP2, BMP7 and FGF7 on renal branching morphogenesis. Required for coronary vascular development. Plays a role in regulating cell movements during gastrulation. The polypeptide is Glypican-3 (GPC3) (Homo sapiens (Human)).